A 292-amino-acid chain; its full sequence is 4-hydroxy-tetrahydrodipicolinate synthase (292 aa).

Position 45 (Thr45) interacts with pyruvate. Tyr133 (proton donor/acceptor) is an active-site residue. The Schiff-base intermediate with substrate role is filled by Lys161. Residue Ile203 coordinates pyruvate.

This sequence belongs to the DapA family. Homotetramer; dimer of dimers.

The protein localises to the cytoplasm. The enzyme catalyses L-aspartate 4-semialdehyde + pyruvate = (2S,4S)-4-hydroxy-2,3,4,5-tetrahydrodipicolinate + H2O + H(+). The protein operates within amino-acid biosynthesis; L-lysine biosynthesis via DAP pathway; (S)-tetrahydrodipicolinate from L-aspartate: step 3/4. Catalyzes the condensation of (S)-aspartate-beta-semialdehyde [(S)-ASA] and pyruvate to 4-hydroxy-tetrahydrodipicolinate (HTPA). The protein is 4-hydroxy-tetrahydrodipicolinate synthase of Klebsiella pneumoniae subsp. pneumoniae (strain ATCC 700721 / MGH 78578).